Reading from the N-terminus, the 251-residue chain is 3-dehydroquinate dehydratase (251 aa).

3-dehydroquinate contacts are provided by residues 47–49 (EWR) and R83. The active-site Proton donor/acceptor is the H144. The Schiff-base intermediate with substrate role is filled by K171. 3-dehydroquinate-binding residues include R214, S233, and Q237.

The protein belongs to the type-I 3-dehydroquinase family. In terms of assembly, homodimer.

It catalyses the reaction 3-dehydroquinate = 3-dehydroshikimate + H2O. It functions in the pathway metabolic intermediate biosynthesis; chorismate biosynthesis; chorismate from D-erythrose 4-phosphate and phosphoenolpyruvate: step 3/7. Functionally, involved in the third step of the chorismate pathway, which leads to the biosynthesis of aromatic amino acids. Catalyzes the cis-dehydration of 3-dehydroquinate (DHQ) and introduces the first double bond of the aromatic ring to yield 3-dehydroshikimate. This is 3-dehydroquinate dehydratase from Klebsiella pneumoniae subsp. pneumoniae (strain ATCC 700721 / MGH 78578).